Reading from the N-terminus, the 426-residue chain is MSKSENLYAQAQQLIPGGVNSPVRAFTGVGGIPLFIERADGAYLFDVDGKAYIDYVGSWGPMILGHNHPAIRQAVIEAVERGLSFGAPTEMEVKMAQLVTDLVPTMDMVRMVNSGTEATMSAIRLARGYTGRDKIIKFEGCYHGHADCLLVKAGSGALTLGQPNSPGVPTDFAKHTLTCTYNDLASVRQAFEQYPQEVACIIVEPVAGNMNCIPPLPEFLPGLRALCDEFGALLIIDEVMTGFRVALAGAQDYYHVIPDLTCLGKIIGGGMPVGAFGGRREVMNALAPTGPVYQAGTLSGNPIAMAAGFACLTEISQVGVYETLTELTDSLATGLRHAAKEENIPLVVNHVGGMFGLFFTNADTVTCYQDVMNCDVERFKRFFHLMLEEGVYLAPSAFEAGFMSLAHSNEDIQKTVNAARRCFAKL.

Lys-265 carries the post-translational modification N6-(pyridoxal phosphate)lysine.

This sequence belongs to the class-III pyridoxal-phosphate-dependent aminotransferase family. HemL subfamily. In terms of assembly, homodimer. It depends on pyridoxal 5'-phosphate as a cofactor.

Its subcellular location is the cytoplasm. The catalysed reaction is (S)-4-amino-5-oxopentanoate = 5-aminolevulinate. Its pathway is porphyrin-containing compound metabolism; protoporphyrin-IX biosynthesis; 5-aminolevulinate from L-glutamyl-tRNA(Glu): step 2/2. The chain is Glutamate-1-semialdehyde 2,1-aminomutase from Yersinia pestis bv. Antiqua (strain Antiqua).